Reading from the N-terminus, the 373-residue chain is Ribosomal protein uL16 3-hydroxylase (373 aa).

Positions 92-219 constitute a JmjC domain; sequence PTAALMRPFR…LISGFADYVL (128 aa). Residues Ser-114, 125-127, Arg-140, and His-187 contribute to the substrate site; that span reads HLD. Residues His-125 and Asp-127 each coordinate Fe cation. Fe cation is bound at residue His-187.

The protein belongs to the ROX family. RoxA/YcfD subfamily. Homodimer. Requires Fe(2+) as cofactor.

It carries out the reaction L-arginyl-[ribosomal protein uL16] + 2-oxoglutarate + O2 = (3R)-3-hydroxy-L-arginyl-[ribosomal protein uL16] + succinate + CO2. Growth-regulating oxygenase that catalyzes the hydroxylation of ribosomal protein uL16 on 'Arg-81'. This Escherichia coli (strain K12) protein is Ribosomal protein uL16 3-hydroxylase (roxA).